Consider the following 556-residue polypeptide: Formate--tetrahydrofolate ligase (556 aa).

Residue 65–72 (TPAGEGKT) participates in ATP binding.

This sequence belongs to the formate--tetrahydrofolate ligase family.

The enzyme catalyses (6S)-5,6,7,8-tetrahydrofolate + formate + ATP = (6R)-10-formyltetrahydrofolate + ADP + phosphate. It functions in the pathway one-carbon metabolism; tetrahydrofolate interconversion. This Heliobacterium modesticaldum (strain ATCC 51547 / Ice1) protein is Formate--tetrahydrofolate ligase.